We begin with the raw amino-acid sequence, 76 residues long: Protein sigN132 (76 aa).

The span at 1 to 13 (MLFESISTLSNLK) shows a compositional bias: polar residues. The disordered stretch occupies residues 1–33 (MLFESISTLSNLKSASKSSMIASTGSTSSKSSN). Positions 14–33 (SASKSSMIASTGSTSSKSSN) are enriched in low complexity.

This Dictyostelium discoideum (Social amoeba) protein is Protein sigN132.